The chain runs to 165 residues: Chorismate pyruvate-lyase (165 aa).

M35, R77, L115, and E156 together coordinate substrate.

The protein belongs to the UbiC family. Monomer.

The protein localises to the cytoplasm. The catalysed reaction is chorismate = 4-hydroxybenzoate + pyruvate. It functions in the pathway cofactor biosynthesis; ubiquinone biosynthesis. Functionally, removes the pyruvyl group from chorismate, with concomitant aromatization of the ring, to provide 4-hydroxybenzoate (4HB) for the ubiquinone pathway. The protein is Chorismate pyruvate-lyase of Salmonella enteritidis PT4 (strain P125109).